A 134-amino-acid chain; its full sequence is Phosphoribosyl-AMP cyclohydrolase (134 aa).

Asp-77 is a Mg(2+) binding site. A Zn(2+)-binding site is contributed by Cys-78. Mg(2+)-binding residues include Asp-79 and Asp-81. Positions 95 and 102 each coordinate Zn(2+).

This sequence belongs to the PRA-CH family. As to quaternary structure, homodimer. It depends on Mg(2+) as a cofactor. Zn(2+) serves as cofactor.

It is found in the cytoplasm. It carries out the reaction 1-(5-phospho-beta-D-ribosyl)-5'-AMP + H2O = 1-(5-phospho-beta-D-ribosyl)-5-[(5-phospho-beta-D-ribosylamino)methylideneamino]imidazole-4-carboxamide. Its pathway is amino-acid biosynthesis; L-histidine biosynthesis; L-histidine from 5-phospho-alpha-D-ribose 1-diphosphate: step 3/9. Catalyzes the hydrolysis of the adenine ring of phosphoribosyl-AMP. The protein is Phosphoribosyl-AMP cyclohydrolase of Pseudomonas paraeruginosa (strain DSM 24068 / PA7) (Pseudomonas aeruginosa (strain PA7)).